A 191-amino-acid chain; its full sequence is FMN reductase (NADPH) (191 aa).

This sequence belongs to the SsuE family. As to quaternary structure, homodimer.

It catalyses the reaction FMNH2 + NADP(+) = FMN + NADPH + 2 H(+). Catalyzes an NADPH-dependent reduction of FMN, but is also able to reduce FAD or riboflavin. The sequence is that of FMN reductase (NADPH) (ssuE) from Escherichia coli (strain K12).